A 128-amino-acid chain; its full sequence is Nitrogen fixation nifHD region GlnB-like protein 2 (128 aa).

Belongs to the P(II) protein family.

Could be involved in the regulation of nitrogen fixation. This is Nitrogen fixation nifHD region GlnB-like protein 2 (glnBB) from Methanothermococcus thermolithotrophicus (Methanococcus thermolithotrophicus).